A 410-amino-acid chain; its full sequence is Gamma-glutamyl phosphate reductase (410 aa).

It belongs to the gamma-glutamyl phosphate reductase family.

Its subcellular location is the cytoplasm. The enzyme catalyses L-glutamate 5-semialdehyde + phosphate + NADP(+) = L-glutamyl 5-phosphate + NADPH + H(+). It participates in amino-acid biosynthesis; L-proline biosynthesis; L-glutamate 5-semialdehyde from L-glutamate: step 2/2. Functionally, catalyzes the NADPH-dependent reduction of L-glutamate 5-phosphate into L-glutamate 5-semialdehyde and phosphate. The product spontaneously undergoes cyclization to form 1-pyrroline-5-carboxylate. This Sulfurovum sp. (strain NBC37-1) protein is Gamma-glutamyl phosphate reductase.